We begin with the raw amino-acid sequence, 398 residues long: Fe-regulated protein 8 (398 aa).

In terms of biological role, protein of unknown function; part of the gene cluster that mediates the biosynthesis of siderophore ferrichrome A which is contributing to organismal virulence. The polypeptide is Fe-regulated protein 8 (Mycosarcoma maydis (Corn smut fungus)).